The following is a 316-amino-acid chain: MRMAVTQNPWQGRVDSGEVGDTTRLFRIVNTLESSEAKTLGGSPVLLGFGCDAGVLRNQGRAGAAHGPDAIRQALANVPAHGLPALYDAGNIACEHGDLESAQLALAGSVHNILSRGGFPLVLGGGHEVAWGTWQGLRAHLDARNDDGRLLIINIDAHFDLRTSRPASSGTPFDQIANACAERGQPFDYVCLGVSRLSNTPALFSRAHALGVSYVEDVDMQERHLASRLAELAARIDATDHVYLTIDLDALPATVMPGVSAPAAYGVPLPVVEEIALLARRSGKLRAADLAEYNPQYDRDNLGARVAARLAWRLLG.

Mn(2+) contacts are provided by His-127, Asp-156, His-158, Asp-160, Asp-247, and Asp-249.

This sequence belongs to the arginase family. Mn(2+) is required as a cofactor.

It catalyses the reaction N-formimidoyl-L-glutamate + H2O = formamide + L-glutamate. The protein operates within amino-acid degradation; L-histidine degradation into L-glutamate; L-glutamate from N-formimidoyl-L-glutamate (hydrolase route): step 1/1. Catalyzes the conversion of N-formimidoyl-L-glutamate to L-glutamate and formamide. The protein is Formimidoylglutamase of Cupriavidus pinatubonensis (strain JMP 134 / LMG 1197) (Cupriavidus necator (strain JMP 134)).